We begin with the raw amino-acid sequence, 360 residues long: MSDIHAKKFSKQSSIPGMKLIPGLILAAILTAISIYAGNIPWFINMGLGTLTLAILAGIIVGNTVYPLLKPYCDEGIHFSKHYLLRAGIILYGFRLTFQQIADVGITGLLIDAAMLSSTFFIAIWLGKSLFGLDQQTVILIGAGSSICGAAAIMATEPVVNAPASKVAVAVSTIVIFGTIAIFIYPWFYQLNEHYQWLPLTQETFGIFTGSTLHEVAQVVAVGHAISDQTENVAVISKMIRVMMLAPFLLLLSRYINHADTKNGRNHQEKTPITIPWFAVIFIAIAGFNSFNLLPAAIVNSLINIDTIMLTMAMGALGLTTHVSAIRQAGFKPILLALILFVWLMAGGLLINLGIQHLFG.

The next 9 membrane-spanning stretches (helical) occupy residues 20 to 42 (LIPG…NIPW), 47 to 69 (GLGT…YPLL), 104 to 126 (VGIT…AIWL), 136 to 155 (QTVI…AIMA), 167 to 189 (VAVA…PWFY), 239 to 256 (MIRV…SRYI), 277 to 299 (WFAV…AAIV), 304 to 326 (NIDT…VSAI), and 333 to 355 (PILL…NLGI).

It belongs to the UPF0324 family.

The protein resides in the cell membrane. The polypeptide is UPF0324 membrane protein plu2856 (Photorhabdus laumondii subsp. laumondii (strain DSM 15139 / CIP 105565 / TT01) (Photorhabdus luminescens subsp. laumondii)).